We begin with the raw amino-acid sequence, 868 residues long: Facilitated trehalose transporter Tret1 (868 aa).

Disordered regions lie at residues 1 to 213 and 257 to 314; these read MSGR…QKAT and KESS…LIHR. Residues 1 to 403 lie on the Cytoplasmic side of the membrane; sequence MSGRDNRGAG…VYRPTTNPIY (403 aa). Positions 25-43 are enriched in basic and acidic residues; sequence KLKEKLTRAGDDQGYHRVE. 3 stretches are compositionally biased toward low complexity: residues 44–57, 79–91, and 117–126; these read SNLS…SLDT, PQQQ…QQLR, and PFQQQQQRTP. Basic and acidic residues-rich tracts occupy residues 146–155 and 257–290; these read EIREHRDRQQ and KESS…KLDK. A phosphoserine mark is found at Ser259, Ser260, Ser261, Ser331, and Ser333. A disordered region spans residues 335–367; that stretch reads EDFHTSRQHFQQQRSISTDSRKSRRPYEMDEMG. Positions 342-352 are enriched in polar residues; sequence QHFQQQRSIST. Residues 353–367 are compositionally biased toward basic and acidic residues; it reads DSRKSRRPYEMDEMG. A helical membrane pass occupies residues 404–424; the sequence is IWTQVLAALSVSLGSLVVGFV. Topologically, residues 425–451 are extracellular; it reads SAYTSPALVSMTNRNMTSFEVTPQAAS. Asn439 carries N-linked (GlcNAc...) asparagine glycosylation. A helical membrane pass occupies residues 452-472; it reads WVGGIMPLAGLAGGIAGGPFI. Residues 473–484 lie on the Cytoplasmic side of the membrane; sequence EYLGRRNTILAT. Residues 485–505 form a helical membrane-spanning segment; it reads AIPFIVSSLLIACAVNVAMVL. The Extracellular segment spans residues 506–508; the sequence is AGR. A helical transmembrane segment spans residues 509–529; that stretch reads FLAGFCVGIASLSLPVYLGET. The Cytoplasmic segment spans residues 530–535; sequence VQPEVR. A helical membrane pass occupies residues 536–556; the sequence is GTLGLLPTAFGNIGILLCFVA. Over 557 to 563 the chain is Extracellular; the sequence is GTYMDWS. The chain crosses the membrane as a helical span at residues 564 to 584; that stretch reads MLAFLGAALPVPFLILMFLIP. Topologically, residues 585 to 653 are cytoplasmic; sequence ETPRWFVSRG…NLKPLSISLG (69 aa). Residues 654 to 674 form a helical membrane-spanning segment; it reads LMFFQQLSGINAVIFYTVSIF. Over 675 to 684 the chain is Extracellular; the sequence is KDAGSTIDGN. The helical transmembrane segment at 685-705 threads the bilayer; the sequence is LCTIIVGIVNFMATFIATLLI. At 706 to 711 the chain is on the cytoplasmic side; it reads DRAGRK. A helical transmembrane segment spans residues 712-732; it reads ILLYVSNIAMIITLFVLGGFF. The Extracellular segment spans residues 733 to 751; that stretch reads YCKSHGQDVSQLGWLPLSC. A helical transmembrane segment spans residues 752-772; sequence FVIYILGFSLGFGPIPWLMMG. The Cytoplasmic segment spans residues 773 to 778; it reads EILPSK. Residues 779 to 799 traverse the membrane as a helical segment; that stretch reads IRGSAASVATAFNWSCTFVVT. Over 800-812 the chain is Extracellular; sequence KTFQDMIDFMGAH. Residues 813-833 form a helical membrane-spanning segment; the sequence is GAFWLFGSICFIGLFFVILYV. Residues 834-868 lie on the Cytoplasmic side of the membrane; that stretch reads PETQGKTLEDIERKMMGRVRRMSSVANMKPLAFNM. Phosphoserine occurs at positions 856 and 857.

The protein belongs to the major facilitator superfamily. Sugar transporter (TC 2.A.1.1) family. Trehalose transporter subfamily.

The protein resides in the cell membrane. Low-capacity facilitative transporter for trehalose. Does not transport maltose, sucrose or lactose. Mediates the bidirectional transfer of trehalose. Responsible for the transport of trehalose synthesized in the fat body and the incorporation of trehalose into other tissues that require a carbon source, thereby regulating trehalose levels in the hemolymph. The protein is Facilitated trehalose transporter Tret1 of Drosophila pseudoobscura pseudoobscura (Fruit fly).